We begin with the raw amino-acid sequence, 393 residues long: S-adenosylmethionine synthase (393 aa).

Glutamate 9 is a binding site for Mg(2+). Residue histidine 15 participates in ATP binding. Glutamate 43 provides a ligand contact to K(+). 2 residues coordinate L-methionine: glutamate 56 and glutamine 99. ATP contacts are provided by residues 167–169, 235–238, aspartate 246, 252–253, alanine 269, lysine 273, and lysine 277; these read HGK, SGRF, and RK. Aspartate 246 is an L-methionine binding site. Lysine 277 contacts L-methionine.

Belongs to the AdoMet synthase family. Homotetramer. Mn(2+) is required as a cofactor. The cofactor is Mg(2+). It depends on Co(2+) as a cofactor. K(+) serves as cofactor. In terms of tissue distribution, root.

The protein resides in the cytoplasm. It catalyses the reaction L-methionine + ATP + H2O = S-adenosyl-L-methionine + phosphate + diphosphate. It participates in amino-acid biosynthesis; S-adenosyl-L-methionine biosynthesis; S-adenosyl-L-methionine from L-methionine: step 1/1. In terms of biological role, catalyzes the formation of S-adenosylmethionine from methionine and ATP. The reaction comprises two steps that are both catalyzed by the same enzyme: formation of S-adenosylmethionine (AdoMet) and triphosphate, and subsequent hydrolysis of the triphosphate. This chain is S-adenosylmethionine synthase (METK), found in Pinus banksiana (Jack pine).